Consider the following 519-residue polypeptide: Methionine--tRNA ligase (519 aa).

Positions 11-21 (AYPNAAPHVGH) match the 'HIGH' region motif. The 'KMSKS' region signature appears at 299–303 (KMSKS). Lys-302 is a binding site for ATP. Residues 500–519 (LPPPTGVFPRYQPPQPPEGK) are disordered.

It belongs to the class-I aminoacyl-tRNA synthetase family. MetG type 2B subfamily. In terms of assembly, monomer.

It localises to the cytoplasm. The catalysed reaction is tRNA(Met) + L-methionine + ATP = L-methionyl-tRNA(Met) + AMP + diphosphate. In terms of biological role, is required not only for elongation of protein synthesis but also for the initiation of all mRNA translation through initiator tRNA(fMet) aminoacylation. This chain is Methionine--tRNA ligase, found in Mycobacterium tuberculosis (strain ATCC 25618 / H37Rv).